Consider the following 125-residue polypeptide: Protein sigma-1-small (125 aa).

It belongs to the orthoreovirus sigma-1s protein family.

The sequence is that of Protein sigma-1-small (S1) from Mammalia (T2J).